A 227-amino-acid polypeptide reads, in one-letter code: ATP synthase F(0) complex subunit a (227 aa).

6 helical membrane passes run 14 to 34 (LLGI…LPSP), 69 to 89 (WALI…LGLL), 98 to 118 (QLSM…LTGL), 139 to 159 (IPAL…ALGV), 174 to 194 (LIST…VLTA), and 196 to 216 (VLLL…YVFV).

Belongs to the ATPase A chain family. In terms of assembly, component of the ATP synthase complex composed at least of ATP5F1A/subunit alpha, ATP5F1B/subunit beta, ATP5MC1/subunit c (homooctomer), MT-ATP6/subunit a, MT-ATP8/subunit 8, ATP5ME/subunit e, ATP5MF/subunit f, ATP5MG/subunit g, ATP5MK/subunit k, ATP5MJ/subunit j, ATP5F1C/subunit gamma, ATP5F1D/subunit delta, ATP5F1E/subunit epsilon, ATP5PF/subunit F6, ATP5PB/subunit b, ATP5PD/subunit d, ATP5PO/subunit OSCP. ATP synthase complex consists of a soluble F(1) head domain (subunits alpha(3) and beta(3)) - the catalytic core - and a membrane F(0) domain - the membrane proton channel (subunits c, a, 8, e, f, g, k and j). These two domains are linked by a central stalk (subunits gamma, delta, and epsilon) rotating inside the F1 region and a stationary peripheral stalk (subunits F6, b, d, and OSCP). Interacts with DNAJC30; interaction is direct.

Its subcellular location is the mitochondrion inner membrane. The enzyme catalyses H(+)(in) = H(+)(out). Functionally, subunit a, of the mitochondrial membrane ATP synthase complex (F(1)F(0) ATP synthase or Complex V) that produces ATP from ADP in the presence of a proton gradient across the membrane which is generated by electron transport complexes of the respiratory chain. ATP synthase complex consist of a soluble F(1) head domain - the catalytic core - and a membrane F(1) domain - the membrane proton channel. These two domains are linked by a central stalk rotating inside the F(1) region and a stationary peripheral stalk. During catalysis, ATP synthesis in the catalytic domain of F(1) is coupled via a rotary mechanism of the central stalk subunits to proton translocation. With the subunit c (ATP5MC1), forms the proton-conducting channel in the F(0) domain, that contains two crucial half-channels (inlet and outlet) that facilitate proton movement from the mitochondrial intermembrane space (IMS) into the matrix. Protons are taken up via the inlet half-channel and released through the outlet half-channel, following a Grotthuss mechanism. This chain is ATP synthase F(0) complex subunit a, found in Struthio camelus (Common ostrich).